Reading from the N-terminus, the 471-residue chain is GTPase Der (471 aa).

EngA-type G domains lie at 3–166 (PTLA…EPEA) and 177–350 (IKLA…SSAT). Residues 9 to 16 (GRPNVGKS), 56 to 60 (DTGGI), 118 to 121 (NKVD), 183 to 190 (GRPNVGKS), 230 to 234 (DTAGV), and 295 to 298 (NKWD) each bind GTP. Residues 351–435 (EKLNTNFLTK…PIRFEFKSSE (85 aa)) enclose the KH-like domain. The disordered stretch occupies residues 432–471 (KSSENPFAGRKNAMSKKPEHPSRRANSGGKSINRRPRPKS).

This sequence belongs to the TRAFAC class TrmE-Era-EngA-EngB-Septin-like GTPase superfamily. EngA (Der) GTPase family. In terms of assembly, associates with the 50S ribosomal subunit.

Functionally, GTPase that plays an essential role in the late steps of ribosome biogenesis. This chain is GTPase Der, found in Saccharophagus degradans (strain 2-40 / ATCC 43961 / DSM 17024).